Reading from the N-terminus, the 135-residue chain is T-cell receptor beta chain V region 3H.25 (135 aa).

The signal sequence occupies residues methionine 1–asparagine 20. The interval serine 21–leucine 115 is v segment. Cysteine 42 and cysteine 111 are oxidised to a cystine. Positions phenylalanine 116 to threonine 118 are d segment. A j segment region spans residues serine 119–alanine 135.

The polypeptide is T-cell receptor beta chain V region 3H.25 (Mus musculus (Mouse)).